Consider the following 680-residue polypeptide: MTQSPFILRTDYEPRGDQPEAIGQIVSNIEAGVTDQVLLGVTGSGKTFTMAQVIARCGRPALVLAPNKTLAAQLYNEFRQLFPENAVEYFVSYYDYYQPEAYVPSSDTYIEKDSSINDNIDKLRHAATHALLTRRDVVIVASVSCIYGLGSPEYYAKLVIPVETGQRLSMDALITRLVEVQYERNDYDFHRGTFRVRGDVLEIIPAYHHERALRIEFFGDDIDAISEIDPLTGQVLASVGKTVIYPASHYVSDRDNLVRAISDIRDELGERLRELKGGNRLVEAQRLEQRTMLDLEMMEEMGYCNGVENYSRHLDGRKAGDPPSCLLDYFPDDFLLFVDESHITVSQVGAMYKGDRSRKSTLVDYGFRLPSALDNRPLEFHEFLARLNQAIYVSATPGKWELDRSQGIVAEQIIRPTGLVDPITEVRPTKGQVDDLLGECRLRAARDERVLVTTLTKRMAEDLTEYFNEMGVAARYLHSDIDTMERMAIIQALRRKEFDVLVGINLLREGLDIPEVSLVSILDADKEGFLRSAGSLIQTFGRAARNVEGRVLMYADVVTRSMQAAMDETARRRERQTGYNEAHHIVPATIRKAVETPFDAIYAEAAEAKGRKGKGRKGAAQAAETFAPWSSDPHELAKQIQQLERDMREAAKELEFERAAELRDRIRLLREHLLGAGGAG.

Residues 27 to 192 enclose the Helicase ATP-binding domain; the sequence is SNIEAGVTDQ…ERNDYDFHRG (166 aa). 40 to 47 contacts ATP; sequence GVTGSGKT. The Beta-hairpin motif lies at 93-116; sequence YYDYYQPEAYVPSSDTYIEKDSSI. Residues 432 to 594 form the Helicase C-terminal domain; it reads QVDDLLGECR…IVPATIRKAV (163 aa). A UVR domain is found at 637 to 672; it reads AKQIQQLERDMREAAKELEFERAAELRDRIRLLREH.

Belongs to the UvrB family. As to quaternary structure, forms a heterotetramer with UvrA during the search for lesions. Interacts with UvrC in an incision complex.

The protein resides in the cytoplasm. Functionally, the UvrABC repair system catalyzes the recognition and processing of DNA lesions. A damage recognition complex composed of 2 UvrA and 2 UvrB subunits scans DNA for abnormalities. Upon binding of the UvrA(2)B(2) complex to a putative damaged site, the DNA wraps around one UvrB monomer. DNA wrap is dependent on ATP binding by UvrB and probably causes local melting of the DNA helix, facilitating insertion of UvrB beta-hairpin between the DNA strands. Then UvrB probes one DNA strand for the presence of a lesion. If a lesion is found the UvrA subunits dissociate and the UvrB-DNA preincision complex is formed. This complex is subsequently bound by UvrC and the second UvrB is released. If no lesion is found, the DNA wraps around the other UvrB subunit that will check the other stand for damage. This Nitratidesulfovibrio vulgaris (strain DSM 19637 / Miyazaki F) (Desulfovibrio vulgaris) protein is UvrABC system protein B.